A 179-amino-acid polypeptide reads, in one-letter code: Cytoglobin-2 (179 aa).

A compositionally biased stretch (acidic residues) spans 1 to 11 (MEKEREDEETE). The disordered stretch occupies residues 1–20 (MEKEREDEETEGRERPEPLT). The region spanning 18–167 (PLTDVERGII…LYWHITGAYT (150 aa)) is the Globin domain. Residues H81 and H113 each coordinate heme b.

The protein belongs to the globin family. As to quaternary structure, monomeric. In terms of tissue distribution, expressed in all tissues examined, with highest levels in brain and eye, and considerably lower levels in skin, gut, heart, gill, liver and muscle.

It is found in the cytoplasm. It localises to the nucleus. It catalyses the reaction Fe(II)-heme b-[protein] + nitric oxide + O2 = Fe(III)-heme b-[protein] + nitrate. The catalysed reaction is Fe(III)-heme b-[protein] + nitric oxide + H2O = Fe(II)-heme b-[protein] + nitrite + 2 H(+). The enzyme catalyses 2 superoxide + 2 H(+) = H2O2 + O2. It carries out the reaction H2O2 + AH2 = A + 2 H2O. Functionally, probable multifunctional globin with a hexacoordinated heme iron required for the catalysis of various reactions depending on redox condition of the cell as well as oxygen availability. Has a nitric oxide dioxygenase (NOD) activity and is most probably involved in cell-mediated and oxygen-dependent nitric oxide consumption. Under normoxic conditions functions as a nitric oxide dioxygenase (NOD) but under hypoxic conditions the globin may switch its function to that of a nitrite (NO2) reductase (NiR), generating nitric oxide. Could also have peroxidase and superoxide dismutase activities, detoxifying reactive oxygen species and protecting cells against oxidative stress. Also binds dioxygen with low affinity and could function as an oxygen sensor but has probably no function as a respiratory oxygen carrier. This is Cytoglobin-2 from Danio rerio (Zebrafish).